Reading from the N-terminus, the 231-residue chain is NADH-ubiquinone oxidoreductase chain 4 (231 aa).

A run of 6 helical transmembrane segments spans residues 1–21 (PIAG…YGII), 34–54 (MFLP…LTCL), 63–85 (IAYS…TPWG), 89–111 (AMAL…NTTY), 128–148 (ILPM…ATPP), and 156–176 (LLIM…LGLS).

It belongs to the complex I subunit 4 family.

It is found in the mitochondrion membrane. It carries out the reaction a ubiquinone + NADH + 5 H(+)(in) = a ubiquinol + NAD(+) + 4 H(+)(out). In terms of biological role, core subunit of the mitochondrial membrane respiratory chain NADH dehydrogenase (Complex I) that is believed to belong to the minimal assembly required for catalysis. Complex I functions in the transfer of electrons from NADH to the respiratory chain. The immediate electron acceptor for the enzyme is believed to be ubiquinone. The chain is NADH-ubiquinone oxidoreductase chain 4 (MT-ND4) from Trimeresurus stejnegeri (Chinese green tree viper).